We begin with the raw amino-acid sequence, 287 residues long: Formamidopyrimidine-DNA glycosylase (287 aa).

P2 serves as the catalytic Schiff-base intermediate with DNA. E3 serves as the catalytic Proton donor. The active-site Proton donor; for beta-elimination activity is the K58. DNA contacts are provided by H104, R123, and R166. The FPG-type zinc finger occupies 251–287 (RVYDREGQPCPTPGCKGMIGREVQAGRSTFFCPVCQV). R277 functions as the Proton donor; for delta-elimination activity in the catalytic mechanism.

This sequence belongs to the FPG family. Monomer. Requires Zn(2+) as cofactor.

The enzyme catalyses Hydrolysis of DNA containing ring-opened 7-methylguanine residues, releasing 2,6-diamino-4-hydroxy-5-(N-methyl)formamidopyrimidine.. It catalyses the reaction 2'-deoxyribonucleotide-(2'-deoxyribose 5'-phosphate)-2'-deoxyribonucleotide-DNA = a 3'-end 2'-deoxyribonucleotide-(2,3-dehydro-2,3-deoxyribose 5'-phosphate)-DNA + a 5'-end 5'-phospho-2'-deoxyribonucleoside-DNA + H(+). Functionally, involved in base excision repair of DNA damaged by oxidation or by mutagenic agents. Acts as a DNA glycosylase that recognizes and removes damaged bases. Has a preference for oxidized purines, such as 7,8-dihydro-8-oxoguanine (8-oxoG). Has AP (apurinic/apyrimidinic) lyase activity and introduces nicks in the DNA strand. Cleaves the DNA backbone by beta-delta elimination to generate a single-strand break at the site of the removed base with both 3'- and 5'-phosphates. This is Formamidopyrimidine-DNA glycosylase from Caulobacter sp. (strain K31).